A 368-amino-acid polypeptide reads, in one-letter code: MGLIKLKVNTNSQQYSIIIGNNILKKVNKFLKENSIDFNQCLLVIDKNIPKNLVKDTLKSLPKGSVSIHYFNASEKNKNLKSVNEITSILLKKSFNRNDCLISIGGGITGDVSGFAASTFKRGLKFVNIPTTLLSQVDSSIGGKTGVNTKYGKNLIGSFYQPSLVISDTNFLNSLPKREVVCGYGEILKHSLINGKKFFYFLNKNGKKIIQLKSPFIQTAIHQSCLIKKKVVEADEKELGIRKILNFGHTFAHAFEATLRYSAKLNHGEAVILGVKTAARFSLLNKILNKKEFELIDGHLNDLNLPRDINKFFSIKNLNTIISFMRKDKKNNTKKISLVLLKRIGSPVYKLQFNEKTINLFLKKELTK.

NAD(+)-binding positions include 131–132 (TT), Lys-144, and Lys-153. Zn(2+)-binding residues include Glu-186, His-249, and His-267.

The protein belongs to the sugar phosphate cyclases superfamily. Dehydroquinate synthase family. Co(2+) is required as a cofactor. It depends on Zn(2+) as a cofactor. NAD(+) serves as cofactor.

Its subcellular location is the cytoplasm. It carries out the reaction 7-phospho-2-dehydro-3-deoxy-D-arabino-heptonate = 3-dehydroquinate + phosphate. The protein operates within metabolic intermediate biosynthesis; chorismate biosynthesis; chorismate from D-erythrose 4-phosphate and phosphoenolpyruvate: step 2/7. In terms of biological role, catalyzes the conversion of 3-deoxy-D-arabino-heptulosonate 7-phosphate (DAHP) to dehydroquinate (DHQ). This chain is 3-dehydroquinate synthase, found in Pelagibacter ubique (strain HTCC1062).